The primary structure comprises 31 residues: Cytochrome b6-f complex subunit 6 (31 aa).

A helical membrane pass occupies residues 3 to 23 (TITSYFGFLLAALTITPALFI).

The protein belongs to the PetL family. In terms of assembly, the 4 large subunits of the cytochrome b6-f complex are cytochrome b6, subunit IV (17 kDa polypeptide, PetD), cytochrome f and the Rieske protein, while the 4 small subunits are PetG, PetL, PetM and PetN. The complex functions as a dimer.

Its subcellular location is the plastid. The protein localises to the chloroplast thylakoid membrane. Functionally, component of the cytochrome b6-f complex, which mediates electron transfer between photosystem II (PSII) and photosystem I (PSI), cyclic electron flow around PSI, and state transitions. PetL is important for photoautotrophic growth as well as for electron transfer efficiency and stability of the cytochrome b6-f complex. This chain is Cytochrome b6-f complex subunit 6, found in Zea mays (Maize).